The sequence spans 566 residues: Urease subunit alpha (566 aa).

One can recognise a Urease domain in the interval Gly128–Phe566. Ni(2+) contacts are provided by His133, His135, and Lys216. Residue Lys216 is modified to N6-carboxylysine. A substrate-binding site is contributed by His218. His245 and His271 together coordinate Ni(2+). His319 acts as the Proton donor in catalysis. Residue Asp359 coordinates Ni(2+).

The protein belongs to the metallo-dependent hydrolases superfamily. Urease alpha subunit family. As to quaternary structure, heterotrimer of UreA (gamma), UreB (beta) and UreC (alpha) subunits. Three heterotrimers associate to form the active enzyme. Requires Ni cation as cofactor. Carboxylation allows a single lysine to coordinate two nickel ions.

Its subcellular location is the cytoplasm. It catalyses the reaction urea + 2 H2O + H(+) = hydrogencarbonate + 2 NH4(+). It participates in nitrogen metabolism; urea degradation; CO(2) and NH(3) from urea (urease route): step 1/1. The chain is Urease subunit alpha from Acinetobacter baylyi (strain ATCC 33305 / BD413 / ADP1).